A 77-amino-acid polypeptide reads, in one-letter code: Conotoxin VnMEKL-023 (77 aa).

The signal sequence occupies residues 1 to 19 (MQKLTILLLVAAVLMSTQA). Positions 20–37 (LIKGGGEKRPKEKIRFLS) are excised as a propeptide. 3 disulfides stabilise this stretch: Cys-51–Cys-65, Cys-58–Cys-69, and Cys-64–Cys-74.

Belongs to the conotoxin O2 superfamily. Expressed by the venom duct.

The protein resides in the secreted. This is Conotoxin VnMEKL-023 from Conus ventricosus (Mediterranean cone).